A 589-amino-acid polypeptide reads, in one-letter code: Actin-histidine N-methyltransferase (589 aa).

The tract at residues 1 to 22 (MGKKSRVKTQKSGTGATATVSP) is disordered. Positions 10–20 (QKSGTGATATV) are enriched in polar residues. S-adenosyl-L-methionine contacts are provided by residues arginine 75, 104–106 (EGF), arginine 254, 275–279 (DMCNH), and 325–327 (SGF). Positions 94 to 314 (EGFEMVNFKE…AGEQIYIFYG (221 aa)) constitute an SET domain. A Phosphoserine modification is found at serine 513. The interval 547–589 (LVNGERSFPNGTRSEEDLKQEERKRAKGDAKESSSDSTDAVKE) is disordered. Positions 559 to 589 (RSEEDLKQEERKRAKGDAKESSSDSTDAVKE) are enriched in basic and acidic residues.

This sequence belongs to the class V-like SAM-binding methyltransferase superfamily. SETD3 actin-histidine methyltransferase family. Interacts with MYOD1. Phosphorylated by GSK3B, which is required for recognition by the SCF(FBXW7) complex and subsequent degradation. Post-translationally, ubiquitinated by the SCF(FBXW7) complex following phosphorylation by GSK3B, leading to its degradation by the proteasome.

It is found in the cytoplasm. The protein localises to the nucleus. The enzyme catalyses L-histidyl-[protein] + S-adenosyl-L-methionine = N(tele)-methyl-L-histidyl-[protein] + S-adenosyl-L-homocysteine + H(+). Its function is as follows. Protein-histidine N-methyltransferase that specifically mediates 3-methylhistidine (tele-methylhistidine) methylation of actin at 'His-73'. Histidine methylation of actin is required for smooth muscle contraction of the laboring uterus during delivery. Does not have protein-lysine N-methyltransferase activity and probably only catalyzes histidine methylation of actin. The sequence is that of Actin-histidine N-methyltransferase from Dasypus novemcinctus (Nine-banded armadillo).